The following is a 256-amino-acid chain: Type III pantothenate kinase (256 aa).

6–13 (DAGNSRIK) provides a ligand contact to ATP. Substrate-binding positions include Y90 and 97 to 100 (GSDR). The active-site Proton acceptor is D99. T123 is an ATP binding site. T187 is a substrate binding site.

Belongs to the type III pantothenate kinase family. Homodimer. It depends on NH4(+) as a cofactor. The cofactor is K(+).

The protein localises to the cytoplasm. It catalyses the reaction (R)-pantothenate + ATP = (R)-4'-phosphopantothenate + ADP + H(+). It functions in the pathway cofactor biosynthesis; coenzyme A biosynthesis; CoA from (R)-pantothenate: step 1/5. In terms of biological role, catalyzes the phosphorylation of pantothenate (Pan), the first step in CoA biosynthesis. The chain is Type III pantothenate kinase from Burkholderia mallei (strain NCTC 10247).